Reading from the N-terminus, the 321-residue chain is Annexin A5 (321 aa).

N-acetylalanine is present on Ala-2. 4 Annexin repeats span residues 15–86 (FDER…ALMK), 87–158 (PSRL…VLLQ), 170–242 (AQVE…AVVK), and 246–317 (SIPA…LLCG). Lys-29 participates in a covalent cross-link: Glycyl lysine isopeptide (Lys-Gly) (interchain with G-Cter in SUMO1); alternate. A Glycyl lysine isopeptide (Lys-Gly) (interchain with G-Cter in SUMO2); alternate cross-link involves residue Lys-29. An N6-acetyllysine mark is found at Lys-70, Lys-76, Lys-79, Lys-97, and Lys-101. Position 290 is an N6-succinyllysine (Lys-290). A [IL]-x-C-x-x-[DE] motif motif is present at residues 314-320 (LLCGGED).

This sequence belongs to the annexin family. As to quaternary structure, monomer. Binds ATRX and EIF5B. S-nitrosylation is induced by interferon-gamma and oxidatively-modified low-densitity lipoprotein (LDL(ox)) possibly implicating the iNOS-S100A8/9 transnitrosylase complex.

Functionally, this protein is an anticoagulant protein that acts as an indirect inhibitor of the thromboplastin-specific complex, which is involved in the blood coagulation cascade. This Bos taurus (Bovine) protein is Annexin A5 (ANXA5).